Here is a 1323-residue protein sequence, read N- to C-terminus: Phosphoribosylformylglycinamidine synthase (1323 aa).

ATP-binding positions include 312 to 323, 391 to 393, and alanine 691; these read GAATGSGGEIRD and NGY. Residues aspartate 692, glutamate 733, asparagine 737, and aspartate 903 each contribute to the Mg(2+) site. Serine 905 contributes to the ATP binding site. One can recognise a Glutamine amidotransferase type-1 domain in the interval 1062–1306; it reads VAILREQGVN…YPHSKASEWG (245 aa). The Nucleophile role is filled by cysteine 1156. Active-site residues include histidine 1284 and glutamate 1286.

In the N-terminal section; belongs to the FGAMS family.

The protein localises to the cytoplasm. The catalysed reaction is N(2)-formyl-N(1)-(5-phospho-beta-D-ribosyl)glycinamide + L-glutamine + ATP + H2O = 2-formamido-N(1)-(5-O-phospho-beta-D-ribosyl)acetamidine + L-glutamate + ADP + phosphate + H(+). Its pathway is purine metabolism; IMP biosynthesis via de novo pathway; 5-amino-1-(5-phospho-D-ribosyl)imidazole from N(2)-formyl-N(1)-(5-phospho-D-ribosyl)glycinamide: step 1/2. Phosphoribosylformylglycinamidine synthase involved in the purines biosynthetic pathway. Catalyzes the ATP-dependent conversion of formylglycinamide ribonucleotide (FGAR) and glutamine to yield formylglycinamidine ribonucleotide (FGAM) and glutamate. In Schizosaccharomyces pombe (strain 972 / ATCC 24843) (Fission yeast), this protein is Phosphoribosylformylglycinamidine synthase (ade3).